Reading from the N-terminus, the 369-residue chain is Phenylalanine--tRNA ligase alpha subunit (369 aa).

Glutamate 269 lines the Mg(2+) pocket.

This sequence belongs to the class-II aminoacyl-tRNA synthetase family. Phe-tRNA synthetase alpha subunit type 1 subfamily. In terms of assembly, tetramer of two alpha and two beta subunits. It depends on Mg(2+) as a cofactor.

Its subcellular location is the cytoplasm. The catalysed reaction is tRNA(Phe) + L-phenylalanine + ATP = L-phenylalanyl-tRNA(Phe) + AMP + diphosphate + H(+). This Brucella ovis (strain ATCC 25840 / 63/290 / NCTC 10512) protein is Phenylalanine--tRNA ligase alpha subunit.